The sequence spans 65 residues: GVRDAYIADDKNCVYTCGSNSYCNTECTKNGAESGYCQWFGRWGNGCWCIKLPDKVPIRIPGKCR.

The LCN-type CS-alpha/beta domain occupies 3–65; the sequence is RDAYIADDKN…VPIRIPGKCR (63 aa). 4 cysteine pairs are disulfide-bonded: cysteine 13-cysteine 64, cysteine 17-cysteine 37, cysteine 23-cysteine 47, and cysteine 27-cysteine 49. Arginine 65 carries the arginine amide modification.

Belongs to the long (4 C-C) scorpion toxin superfamily. Sodium channel inhibitor family. Alpha subfamily. Expressed by the venom gland.

It is found in the secreted. In terms of biological role, alpha toxins bind voltage-independently at site-3 of sodium channels (Nav) and inhibit the inactivation of the activated channels, thereby blocking neuronal transmission. This toxin inhibits the inactivation of activated TTX-sensitive sodium channels (Nav). This chain is Alpha-toxin Bs-Tx28, found in Hottentotta tamulus sindicus (Scorpion).